Reading from the N-terminus, the 233-residue chain is Large ribosomal subunit protein bL25 (233 aa).

Positions 1 to 23 are disordered; it reads MATVRELKATARPKSGKGAARAE.

The protein belongs to the bacterial ribosomal protein bL25 family. CTC subfamily. Part of the 50S ribosomal subunit; part of the 5S rRNA/L5/L18/L25 subcomplex. Contacts the 5S rRNA. Binds to the 5S rRNA independently of L5 and L18.

In terms of biological role, this is one of the proteins that binds to the 5S RNA in the ribosome where it forms part of the central protuberance. The protein is Large ribosomal subunit protein bL25 of Nitrobacter hamburgensis (strain DSM 10229 / NCIMB 13809 / X14).